The primary structure comprises 313 residues: N-acetyl-gamma-glutamyl-phosphate reductase (313 aa).

Cysteine 117 is an active-site residue.

This sequence belongs to the NAGSA dehydrogenase family. Type 2 subfamily.

The protein resides in the cytoplasm. It carries out the reaction N-acetyl-L-glutamate 5-semialdehyde + phosphate + NADP(+) = N-acetyl-L-glutamyl 5-phosphate + NADPH + H(+). It participates in amino-acid biosynthesis; L-arginine biosynthesis; N(2)-acetyl-L-ornithine from L-glutamate: step 3/4. In terms of biological role, catalyzes the NADPH-dependent reduction of N-acetyl-5-glutamyl phosphate to yield N-acetyl-L-glutamate 5-semialdehyde. The polypeptide is N-acetyl-gamma-glutamyl-phosphate reductase (Burkholderia orbicola (strain MC0-3)).